The chain runs to 153 residues: UPF0102 protein Pnap_0271 (153 aa).

This sequence belongs to the UPF0102 family.

This chain is UPF0102 protein Pnap_0271, found in Polaromonas naphthalenivorans (strain CJ2).